A 90-amino-acid polypeptide reads, in one-letter code: UPF0297 protein Swol_0469 (90 aa).

The protein belongs to the UPF0297 family.

In Syntrophomonas wolfei subsp. wolfei (strain DSM 2245B / Goettingen), this protein is UPF0297 protein Swol_0469.